The chain runs to 472 residues: 3-isopropylmalate dehydratase large subunit (472 aa).

[4Fe-4S] cluster contacts are provided by cysteine 353, cysteine 414, and cysteine 417.

This sequence belongs to the aconitase/IPM isomerase family. LeuC type 1 subfamily. Heterodimer of LeuC and LeuD. [4Fe-4S] cluster serves as cofactor.

It catalyses the reaction (2R,3S)-3-isopropylmalate = (2S)-2-isopropylmalate. The protein operates within amino-acid biosynthesis; L-leucine biosynthesis; L-leucine from 3-methyl-2-oxobutanoate: step 2/4. Functionally, catalyzes the isomerization between 2-isopropylmalate and 3-isopropylmalate, via the formation of 2-isopropylmaleate. This Psychrobacter cryohalolentis (strain ATCC BAA-1226 / DSM 17306 / VKM B-2378 / K5) protein is 3-isopropylmalate dehydratase large subunit.